The primary structure comprises 197 residues: MSGPRPVVLSGPSGAGKSTLLKRLLQEHSGIFGFSVSHTTRNPRPGEENGKDYYFVTREVMQRDIAAGDFIEHAEFSGNLYGTSKVAVQAVQAMNRICVLDVDLQGVRNIKATDLRPIYISVQPPSLHVLEQRLRQRNTETEESLVKRLAAAQADMESSKEPGLFDVVIINDSLDQAYAELKEALSEEIKKAQRTGA.

S2 is modified (N-acetylserine). Positions 4 to 186 constitute a Guanylate kinase-like domain; it reads PRPVVLSGPS…AYAELKEALS (183 aa). Residue 14–19 coordinates ATP; the sequence is GAGKST. 37–51 contacts substrate; it reads SHTTRNPRPGEENGK. Active-site residues include R44, R137, and R148. Residue R137 coordinates ATP. 171–172 lines the ATP pocket; sequence ND.

It belongs to the guanylate kinase family. Monomer. Interacts with RD3. Widely expressed.

The protein resides in the photoreceptor inner segment. It is found in the cytoplasm. The protein localises to the cytosol. Its subcellular location is the mitochondrion. It catalyses the reaction GMP + ATP = GDP + ADP. Its activity is regulated as follows. Up-regulated by RD3. Catalyzes the phosphorylation of GMP to GDP. Essential enzyme for recycling GMP and indirectly, cyclic GMP (cGMP). Involved in the cGMP metabolism in photoreceptors. It may also have a role in the survival and growth progression of some tumors. In addition to its physiological role, GUK1 is essential for converting prodrugs used for the treatment of cancers and viral infections into their pharmacologically active metabolites, most notably acyclovir, ganciclovir, and 6-thioguanine and its closely related analog 6-mercaptopurine. The chain is Guanylate kinase from Homo sapiens (Human).